Reading from the N-terminus, the 202-residue chain is Large ribosomal subunit protein bL25 (202 aa).

The protein belongs to the bacterial ribosomal protein bL25 family. CTC subfamily. As to quaternary structure, part of the 50S ribosomal subunit; part of the 5S rRNA/L5/L18/L25 subcomplex. Contacts the 5S rRNA. Binds to the 5S rRNA independently of L5 and L18.

Functionally, this is one of the proteins that binds to the 5S RNA in the ribosome where it forms part of the central protuberance. This chain is Large ribosomal subunit protein bL25, found in Rickettsia bellii (strain OSU 85-389).